Here is a 191-residue protein sequence, read N- to C-terminus: dTTP/UTP pyrophosphatase (191 aa).

The Proton acceptor role is filled by D69.

The protein belongs to the Maf family. YhdE subfamily. Requires a divalent metal cation as cofactor.

Its subcellular location is the cytoplasm. The enzyme catalyses dTTP + H2O = dTMP + diphosphate + H(+). The catalysed reaction is UTP + H2O = UMP + diphosphate + H(+). Its function is as follows. Nucleoside triphosphate pyrophosphatase that hydrolyzes dTTP and UTP. May have a dual role in cell division arrest and in preventing the incorporation of modified nucleotides into cellular nucleic acids. This Pelotomaculum thermopropionicum (strain DSM 13744 / JCM 10971 / SI) protein is dTTP/UTP pyrophosphatase.